The primary structure comprises 2481 residues: MEQSPPPAPEPTQGPTPARSRRRREPESPPASAPIPLFGADTIGQRSPDGPVLSKAEFVEKVRQSNQACHDGDFHTAIVLYNEALAVDPQNCILYSNRSAAYMKIQQYDKALDDAIKARLLNPKWPKAYFRQGVALQYLGRHADALAAFASGLAQDPKSLQLLVGMVEAAMKSPMRDSLEPTYQQLQKMKLDKSPFVVVSVVGQELLTAGHHGASVVVLEAALKIGTCSLKLRGSVFSALSSAYWSLGNTEKSTGYMQQDLDVAKTLGDQTGECRAHGNLGSAFFSKGNYREALTNHRHQLVLAMKLKDREAASSALSSLGHVYTAIGDYPNALASHKQCVLLAKQSKDELSEARELGNMGAVYIAMGDFENAVQCHEQHLKIAKDLGNKREEARAYSNLGSAYHYRRNFDKAMSYHNYVLELAQELMEKAIEMRAYAGLGHAARCMQDLERAKQYHEQQLGIAEDLKDRAAEGRASSNLGIIHQMKGDYDTALKLHKTHLCIAQELSDYAAQGRAYGNMGNAYNALGMYDQAVKYHRQELQISMEVNDRASQASTHGNLAVAYQALGAHDRALQHYQNHLNIARELRDIQSEARALSNLGNFHCSRGEYVQAAPYYEQYLRLAPDLQDMEGEGKVCHNLGYAHYCLGNYQEAVKYYEQDLALAKDLHDKLSQAKAYCNLGLAFKALLNFSKAEECQKYLLSLAQSLNNSQAKFRALGNLGDIFICKKDINGAIKFYEQQLGLAHQVKDRRLEASAYAALGTAYRMIQKYDKALGYHTQELEVYQELSDLPGECRAHGHLAAVYMALGKYTMAFKCYEEQLDLGQKLKDPSLEAQVYGNMGITKMNMNVMEEAIGYFEQQLAMLQQLSGNESVLDRGRAYGNLGDCYEALGDYEEAIKYYEQYLSVAQSLNRMQDQAKAYRGLGNGHRAMGSLQQALVCFEKRLVVAHELGEAFNKAQAYGELGSLHSQLGNYEQAISCLERQLNIARDMKDRALESDAACGLGGVYQQMGEYDTALQYHQLDLQIAEETNNPTCQGRAYGNLGLTYESLGTFERAVVYQEQHLSIAAQMNDLAAKTVSYSSLGRTHHALQNYSQAVMYLQEGLRLAEQLGRREDEAKIRHGLGLSLWASGNLEEAQHQLYRASALFETIRHEAQLSTDYKLSLFDLQTSSYQALQRVLVSLGHHDEALAVAERGRTRAFADLLVERQTGQQDSDPYSPVTIDQILEMVNGQRGLVLYYSLAAGYLYSWLLAPGAGIVKFHEHYLGENTVENSSDFQASSSVTLPTATGSALEQHIASVREALGVESHYSRACASSETESEAGDIMDQQFEEMNNKLNSVTDPTGFLRMVRRNNLFNRSCQSMTSLFSNTVSPTQDGTSSLPRRQSSFAKPPLRALYDLLIAPMEGGLMHSSGPVGRHRQLILVLEGELYLIPFALLKGSSSNEYLYERFGLLAVPSIRSLSVQSKSHLRKNPPTYSSSTSMAAVIGNPKLPSAVMDRWLWGPMPSAEEEAYMVSELLGCQPLVGSVATKERVMSALTQAECVHFATHISWKLSALVLTPSMDGNPASSKSSFGHPYTIPESLRVQDDASDGESISDCPPLQELLLTAADVLDLQLPVKLVVLGSSQESNSKVTADGVIALTRAFLAAGAQCVLVSLWPVPVAASKMFIHAFYSSLLNGLKASAALGEAMKVVQSSKAFSHPSNWAGFMLIGSDVKLNSPSSLIGQALTEILQHPERARDALRVLLHLVEKSLQRIQNGQRNAMYTSQQSVENKVGGIPGWQALLTAVGFRLDPPTSGLPAAVFFPTSDPGDRLQQCSSTLQSLLGLPNPALQALCKLITASETGEQLISRAVKNMVGMLHQVLVQLQAGEKEQDLASAPIQVSISVQLWRLPGCHEFLAALGFDLCEVGQEEVILKTGKQANRRTVHFALQSLLSLFDSTELPKRLSLDSSSSLESLASAQSVSNALPLGYQQPPFSPTGADSIASDAISVYSLSSIASSMSFVSKPEGGSEGGGPGGRQDHDRSKNAYLQRSTLPRSQLPPQTRPAGNKDEEEYEGFSIISNEPLATYQENRNTCFSPDHKQPQPGTAGGMRVSVSSKGSISTPNSPVKMTLIPSPNSPFQKVGKLASSDTGESDQSSTETDSTVKSQEESNPKLDPQELAQKILEETQSHLIAVERLQRSGGQVSKSNNPEDGVQAPSSTAVFRASETSAFSRPVLSHQKSQPSPVTVKPKPPARSSSLPKVSSGYSSPTTSEMSIKDSPSQHSGRPSPGCDSQTSQLDQPLFKLKYPSSPYSAHISKSPRNMSPSSGHQSPAGSAPSPALSYSSAGSARSSPADAPDIDKLKMAAIDEKVQAVHNLKMFWQSTPQHSTGPMKIFRGAPGTMTSKRDVLSLLNLSPRHNKKEEGVDKLELKELSLQQHDGAPPKAPPNGHWRTETTSLGSLPLPAGPPATAPARPLRLPSGNGYKFLSPGRFFPSSKC.

Position 1 is an N-acetylmethionine (Met1). Positions 1–14 (MEQSPPPAPEPTQG) are enriched in pro residues. A disordered region spans residues 1–48 (MEQSPPPAPEPTQGPTPARSRRRREPESPPASAPIPLFGADTIGQRSP). Ser28 is subject to Phosphoserine. 28 TPR repeats span residues 58 to 91 (FVEK…DPQN), 93 to 125 (ILYS…NPKW), 126 to 159 (PKAY…DPKS), 196 to 229 (FVVV…GTCS), 234 to 267 (GSVF…AKTL), 274 to 307 (CRAH…AMKL), 314 to 347 (SSAL…AKQS), 354 to 387 (AREL…AKDL), 394 to 427 (ARAY…AQEL), 434 to 467 (MRAY…AEDL), 474 to 507 (GRAS…AQEL), 514 to 547 (GRAY…SMEV), 554 to 587 (ASTH…AREL), 594 to 627 (ARAL…APDL), 634 to 667 (GKVC…AKDL), 674 to 707 (AKAY…AQSL), 714 to 747 (FRAL…AHQV), 754 to 787 (ASAY…YQEL), 794 to 827 (CRAH…GQKL), 834 to 867 (AQVY…LQQL), 877 to 910 (GRAY…AQSL), 917 to 950 (AKAY…AHEL), 957 to 990 (AQAY…ARDM), 997 to 1030 (SDAA…AEET), 1037 to 1070 (GRAY…AAQM), 1077 to 1110 (TVSY…AEQL), 1117 to 1150 (AKIR…FETI), and 1169 to 1202 (TSSY…AFAD). A Phosphoserine modification is found at Ser1590. Disordered stretches follow at residues 2004 to 2055 (FVSK…DEEE), 2075 to 2161 (NTCF…DPQE), and 2176 to 2339 (AVER…PADA). 2 stretches are compositionally biased toward polar residues: residues 2029–2043 (AYLQ…QLPP) and 2096–2122 (SVSS…NSPF). A Phosphoserine modification is found at Ser2104. Over residues 2130 to 2146 (SSDTGESDQSSTETDST) the composition is skewed to low complexity. Residues 2149–2159 (SQEESNPKLDP) show a composition bias toward basic and acidic residues. Residues 2183–2214 (SGGQVSKSNNPEDGVQAPSSTAVFRASETSAF) are compositionally biased toward polar residues. Residues Ser2224 and Ser2251 each carry the phosphoserine modification. A compositionally biased stretch (polar residues) spans 2238–2282 (RSSSLPKVSSGYSSPTTSEMSIKDSPSQHSGRPSPGCDSQTSQLD). The segment covering 2307–2339 (SPSSGHQSPAGSAPSPALSYSSAGSARSSPADA) has biased composition (low complexity). Phosphoserine occurs at positions 2393 and 2398. A disordered region spans residues 2420–2467 (QHDGAPPKAPPNGHWRTETTSLGSLPLPAGPPATAPARPLRLPSGNGY).

As to quaternary structure, interacts with AURKB. As to expression, widely expressed in fetal tissues. In adult tissues, expressed in testis and ovary and, at much lower levels, in kidney and pancreas.

It is found in the cytoplasm. It localises to the cytoskeleton. Its subcellular location is the microtubule organizing center. The protein resides in the centrosome. The protein localises to the spindle. It is found in the spindle pole. It localises to the midbody. Functionally, during mitosis, may be involved in the condensation of spindle midzone microtubules, leading to the formation of midbody. This Homo sapiens (Human) protein is Tetratricopeptide repeat protein 28 (TTC28).